The following is a 523-amino-acid chain: Metalloendopeptidase OMA1, mitochondrial (523 aa).

Residues 1–45 (MSFIYGLQSAARNCFFFRFNLLTNWRKCNTQAVTSRDFHQVKINH) constitute a mitochondrion transit peptide. Positions 46–143 (IVNKSLGLGV…RSFHTSPRCQ (98 aa)) are excised as a propeptide. At 144–195 (AAPAPLLLMILKPAQKLLAIIVGRGIRKWWQALPPNKKELFKESLRKNKWKL) the chain is on the mitochondrial matrix side. Positions 148–167 (PLLLMILKPAQKLLAIIVGR) are cardiolipin-binding. A stress-sensor region region spans residues 165–195 (VGRGIRKWWQALPPNKKELFKESLRKNKWKL). Residues 196–216 (FLGLSSFGLLFVVFYFTHLEV) form a helical membrane-spanning segment. Zn(2+) is bound at residue His-327. Residue Glu-328 is part of the active site. Zn(2+) is bound by residues His-331 and Glu-392. Cys-407 and Cys-465 are oxidised to a cystine.

This sequence belongs to the peptidase M48 family. Homooligomer. Requires Zn(2+) as cofactor. Post-translationally, autocatalytically cleaved in response to mitochondrial depolarization both at the N-terminus and C-terminus to generate the short active form (S-OMA1). Autocatalytic processing at the C-terminus takes place at residues 447-456. The S-OMA1 form is unstable. OMA1 pre-processing by AFG3L2 may participate in maturation before OMA1 autocatalytic cleavage. Degraded by YMEL1 in response to membrane depolarization. Protein turnover is regulated by prohibitin (PHB and PHB2), which promotes degradation of OMA1 in a cardiolipin-binding manner. In terms of processing, may form a redox-dependent disulfide bond. Exists in a semi-oxidized state and is activated by prolonged hypoxia.

It is found in the mitochondrion inner membrane. Its activity is regulated as follows. Protease activity is activated upon autocatalytic cleavage in response to mitochondrial depolarization. In terms of biological role, metalloprotease that is part of the quality control system in the inner membrane of mitochondria. Activated in response to various mitochondrial stress, leading to the proteolytic cleavage of target proteins, such as OPA1, UQCC3 and DELE1. Involved in the fusion of the mitochondrial inner membranes by mediating cleavage of OPA1 at S1 position, generating the soluble OPA1 (S-OPA1), which cooperates with the membrane form (L-OPA1) to coordinate the fusion of mitochondrial inner membranes. Following stress conditions that induce loss of mitochondrial membrane potential, mediates cleavage of OPA1, leading to excess production of soluble OPA1 (S-OPA1) and negative regulation of mitochondrial fusion. Involved in mitochondrial safeguard in response to transient mitochondrial membrane depolarization (flickering) by catalyzing cleavage of OPA1, leading to excess production of S-OPA1, preventing mitochondrial hyperfusion. Also acts as a regulator of apoptosis: upon BAK and BAX aggregation, mediates cleavage of OPA1, leading to the remodeling of mitochondrial cristae and allowing the release of cytochrome c from mitochondrial cristae. In depolarized mitochondria, may also act as a backup protease for PINK1 by mediating PINK1 cleavage and promoting its subsequent degradation by the proteasome. May also cleave UQCC3 in response to mitochondrial depolarization. Also acts as an activator of the integrated stress response (ISR): in response to mitochondrial stress, mediates cleavage of DELE1 to generate the processed form of DELE1 (S-DELE1), which translocates to the cytosol and activates EIF2AK1/HRI to trigger the ISR. Its role in mitochondrial quality control is essential for regulating lipid metabolism as well as to maintain body temperature and energy expenditure under cold-stress conditions. Binds cardiolipin, possibly regulating its protein turnover. Required for the stability of the respiratory supercomplexes. This chain is Metalloendopeptidase OMA1, mitochondrial, found in Bos taurus (Bovine).